Here is a 443-residue protein sequence, read N- to C-terminus: 2-hydroxyethylphosphonate dioxygenase (443 aa).

The HTH cro/C1-type 1 domain occupies 8 to 63 (LAHWMNARKYTAAQTADLAGLPLDDLRRLLGDEANEPDPAAATALAEALSVEPSQL). Lys16 contacts substrate. Positions 19–38 (AAQTADLAGLPLDDLRRLLG) form a DNA-binding region, H-T-H motif. Residues Tyr98 and Asn126 each coordinate substrate. A Fe cation-binding site is contributed by His129. 3 residues coordinate substrate: Glu176, His182, and Ser196. His182 lines the Fe cation pocket. Positions 234–290 (VLDLFLARRAHTRTSAAEAAGVPPADLEAALRSPASETGLTVLRTLGRALGFDYRVL) constitute an HTH cro/C1-type 2 domain. Residues 245 to 265 (TRTSAAEAAGVPPADLEAALR) constitute a DNA-binding region (H-T-H motif).

The protein belongs to the non-heme iron-dependent dioxygenase family. Homodimer. Fe(2+) is required as a cofactor.

It carries out the reaction 2-hydroxyethylphosphonate + O2 = hydroxymethylphosphonate + formate + H(+). It participates in secondary metabolite biosynthesis; bialaphos biosynthesis. Functionally, non-heme-dependent dioxygenase that catalyzes the conversion of 2-hydroxyethylphosphonate (HEP) to hydroxymethylphosphonate (HMP) in the biosynthesis of phosphinothricin tripeptide (PTT), also known as bialaphos (BA), a natural-product antibiotic and potent herbicide. PTT contains the unusual amino acid phosphinothricin attached to 2 alanine residues. Synthetic phosphinothricin (glufosinate) is a key component of commercial herbicides. This Streptomyces viridochromogenes (strain DSM 40736 / JCM 4977 / BCRC 1201 / Tue 494) protein is 2-hydroxyethylphosphonate dioxygenase (hepD).